A 225-amino-acid chain; its full sequence is Cold-regulated 413 inner membrane protein 1, chloroplastic (225 aa).

A chloroplast-targeting transit peptide spans 1 to 76 (MASLCLSSSR…RKRGSSVVCY (76 aa)). A topological domain (stromal) is located at residue A77. Residues 78–98 (APISANSLQWISTISCLALML) traverse the membrane as a helical segment. Topologically, residues 99–102 (ARGT) are chloroplast intermembrane. A helical transmembrane segment spans residues 103–123 (GIHKSVVVPLFALHAPSSIVA). The Stromal segment spans residues 124 to 128 (WIKGE). The helical transmembrane segment at 129-149 (YGVWAAFLALIARLFFTFPGE) threads the bilayer. The Chloroplast intermembrane portion of the chain corresponds to 150 to 151 (LE). Residues 152–172 (LPFIALLLVIVAPYQVMNIRG) traverse the membrane as a helical segment. The Stromal portion of the chain corresponds to 173–175 (KQE). Residues 176 to 196 (GAIIAIAISGFLAFQHFSRAG) form a helical membrane-spanning segment. Topologically, residues 197-204 (SLEKAYEK) are chloroplast intermembrane. A helical membrane pass occupies residues 205–225 (GSVLATVAIIGVTVVSLLLLL).

It belongs to the Cold-regulated 413 protein family.

It is found in the plastid. The protein resides in the chloroplast inner membrane. This chain is Cold-regulated 413 inner membrane protein 1, chloroplastic (COR413IM1), found in Arabidopsis thaliana (Mouse-ear cress).